A 566-amino-acid chain; its full sequence is Protein RocB (566 aa).

In terms of biological role, involved in arginine degradative pathway. The protein is Protein RocB (rocB) of Bacillus subtilis (strain 168).